The following is a 233-amino-acid chain: Leucyl/phenylalanyl-tRNA--protein transferase (233 aa).

Belongs to the L/F-transferase family.

The protein resides in the cytoplasm. It catalyses the reaction N-terminal L-lysyl-[protein] + L-leucyl-tRNA(Leu) = N-terminal L-leucyl-L-lysyl-[protein] + tRNA(Leu) + H(+). The catalysed reaction is N-terminal L-arginyl-[protein] + L-leucyl-tRNA(Leu) = N-terminal L-leucyl-L-arginyl-[protein] + tRNA(Leu) + H(+). The enzyme catalyses L-phenylalanyl-tRNA(Phe) + an N-terminal L-alpha-aminoacyl-[protein] = an N-terminal L-phenylalanyl-L-alpha-aminoacyl-[protein] + tRNA(Phe). Functions in the N-end rule pathway of protein degradation where it conjugates Leu, Phe and, less efficiently, Met from aminoacyl-tRNAs to the N-termini of proteins containing an N-terminal arginine or lysine. This chain is Leucyl/phenylalanyl-tRNA--protein transferase, found in Laribacter hongkongensis (strain HLHK9).